Here is a 63-residue protein sequence, read N- to C-terminus: MNNNINHIKITQVKSAIGRKYDQRLTLVGLGLNKINKTVILKNTNSIKGMVEKVKHLLKIENM.

Belongs to the universal ribosomal protein uL30 family. Part of the 50S ribosomal subunit.

The polypeptide is Large ribosomal subunit protein uL30 (Rickettsia canadensis (strain McKiel)).